The sequence spans 280 residues: Antiactivator FleN (280 aa).

ATP-binding positions include 19 to 26 (KGGVGKTN), E153, N181, 215 to 217 (PYD), and R221.

Belongs to the ParA family. As to quaternary structure, forms homodimers. Interacts with FleQ.

Its activity is regulated as follows. ATP-binding allows dimerization and subsequent antagonistic effect against FleQ. In terms of biological role, ATPase that plays an important role in maintaining flagellar number in Pseudomonas aeruginosa. Exhibits anti-activator activity against FleQ, the global transcriptional regulator of flagellar genes. The protein is Antiactivator FleN of Pseudomonas aeruginosa (strain ATCC 15692 / DSM 22644 / CIP 104116 / JCM 14847 / LMG 12228 / 1C / PRS 101 / PAO1).